We begin with the raw amino-acid sequence, 308 residues long: Protein translocase subunit SecF (308 aa).

The next 6 helical transmembrane spans lie at 28-48, 140-160, 164-184, 194-214, 246-266, and 272-292; these read SIIL…NFGI, IEAG…YIWV, WYFG…ALGF, LSTI…SVVI, ILTV…GGEA, and VLVF…SAPI.

It belongs to the SecD/SecF family. SecF subfamily. In terms of assembly, forms a complex with SecD. Part of the essential Sec protein translocation apparatus which comprises SecA, SecYEG and auxiliary proteins SecDF-YajC and YidC.

It is found in the cell inner membrane. Its function is as follows. Part of the Sec protein translocase complex. Interacts with the SecYEG preprotein conducting channel. SecDF uses the proton motive force (PMF) to complete protein translocation after the ATP-dependent function of SecA. This is Protein translocase subunit SecF from Rickettsia felis (strain ATCC VR-1525 / URRWXCal2) (Rickettsia azadi).